Consider the following 181-residue polypeptide: Isopentenyl-diphosphate Delta-isomerase (181 aa).

Mn(2+)-binding residues include His-25 and His-32. Residues 30–164 form the Nudix hydrolase domain; it reads LLHLAFSCWL…PWAFSPWMVL (135 aa). Cys-67 is an active-site residue. Residue His-69 coordinates Mn(2+). Mg(2+) is bound at residue Glu-87. The Mn(2+) site is built by Glu-114 and Glu-116. Glu-116 is a catalytic residue.

It belongs to the IPP isomerase type 1 family. Homodimer. Mg(2+) is required as a cofactor. The cofactor is Mn(2+).

The protein resides in the cytoplasm. It carries out the reaction isopentenyl diphosphate = dimethylallyl diphosphate. It participates in isoprenoid biosynthesis; dimethylallyl diphosphate biosynthesis; dimethylallyl diphosphate from isopentenyl diphosphate: step 1/1. Functionally, catalyzes the 1,3-allylic rearrangement of the homoallylic substrate isopentenyl (IPP) to its highly electrophilic allylic isomer, dimethylallyl diphosphate (DMAPP). In Citrobacter koseri (strain ATCC BAA-895 / CDC 4225-83 / SGSC4696), this protein is Isopentenyl-diphosphate Delta-isomerase.